A 156-amino-acid chain; its full sequence is Cyanate hydratase (156 aa).

Catalysis depends on residues Arg-96, Glu-99, and Ser-122.

This sequence belongs to the cyanase family.

It catalyses the reaction cyanate + hydrogencarbonate + 3 H(+) = NH4(+) + 2 CO2. In terms of biological role, catalyzes the reaction of cyanate with bicarbonate to produce ammonia and carbon dioxide. In Burkholderia ambifaria (strain MC40-6), this protein is Cyanate hydratase.